Consider the following 791-residue polypeptide: FHF complex subunit HOOK-interacting protein 1B (791 aa).

2 disordered regions span residues 465–510 and 524–556; these read APSP…VPRP and SLGG…SPAE. Ser467 carries the post-translational modification Phosphoserine. The segment covering 496 to 510 has biased composition (low complexity); that stretch reads SPSVDSSSVVTVPRP. 5 positions are modified to phosphoserine: Ser524, Ser537, Ser543, Ser547, and Ser679. Residues 541-552 show a composition bias toward low complexity; it reads TASPTSSPGRRP. Thr708 bears the Phosphothreonine mark. Phosphoserine is present on Ser716.

The protein belongs to the FHIP family. Component of the FTS/Hook/FHIP complex (FHF complex), composed of AKTIP/FTS, FHIP1B, and one or more members of the Hook family of proteins HOOK1, HOOK2, and HOOK3. The FHF complex associates with the homotypic vesicular sorting complex (the HOPS complex).

Component of the FTS/Hook/FHIP complex (FHF complex). The FHF complex may function to promote vesicle trafficking and/or fusion via the homotypic vesicular protein sorting complex (the HOPS complex). FHF complex promotes the distribution of AP-4 complex to the perinuclear area of the cell. The polypeptide is FHF complex subunit HOOK-interacting protein 1B (Fhip1b) (Rattus norvegicus (Rat)).